A 109-amino-acid polypeptide reads, in one-letter code: Cytochrome c (109 aa).

Positions 25, 28, 29, and 88 each coordinate heme c.

This sequence belongs to the cytochrome c family. Binds 1 heme c group covalently per subunit.

Its subcellular location is the mitochondrion intermembrane space. Electron carrier protein. The oxidized form of the cytochrome c heme group can accept an electron from the heme group of the cytochrome c1 subunit of cytochrome reductase. Cytochrome c then transfers this electron to the cytochrome oxidase complex, the final protein carrier in the mitochondrial electron-transport chain. The chain is Cytochrome c from Tetrahymena pyriformis.